We begin with the raw amino-acid sequence, 246 residues long: Mast cell protease 9 (246 aa).

A signal peptide spans 1-18 (MQALLFLMALLLPSRAGA). Positions 19-20 (EE) are cleaved as a propeptide — activation peptide. Positions 21–244 (IIGGVESEPH…HVPWINRVIK (224 aa)) constitute a Peptidase S1 domain. Cys50 and Cys66 are oxidised to a cystine. Catalysis depends on charge relay system residues His65 and Asp109. 2 cysteine pairs are disulfide-bonded: Cys143–Cys208 and Cys174–Cys187. The active-site Charge relay system is Ser202.

Belongs to the peptidase S1 family. Granzyme subfamily. Selectively expressed in uterine mast cells.

The protein is Mast cell protease 9 (Mcpt9) of Mus musculus (Mouse).